We begin with the raw amino-acid sequence, 1576 residues long: DNA-directed RNA polymerase subunit beta' (1576 aa).

The Zn(2+) site is built by C64, C66, C79, and C82. D590, D592, and D594 together coordinate Mg(2+). Zn(2+)-binding residues include C928, C1002, C1009, and C1012.

It belongs to the RNA polymerase beta' chain family. The RNAP catalytic core consists of 2 alpha, 1 beta, 1 beta' and 1 omega subunit. When a sigma factor is associated with the core the holoenzyme is formed, which can initiate transcription. Mg(2+) is required as a cofactor. Zn(2+) serves as cofactor.

The enzyme catalyses RNA(n) + a ribonucleoside 5'-triphosphate = RNA(n+1) + diphosphate. Its function is as follows. DNA-dependent RNA polymerase catalyzes the transcription of DNA into RNA using the four ribonucleoside triphosphates as substrates. This is DNA-directed RNA polymerase subunit beta' from Aquifex pyrophilus.